A 78-amino-acid polypeptide reads, in one-letter code: U-scoloptoxin(04)-Er1e (78 aa).

Residues 1 to 24 (MTRHLIFAAMLLVCLFVCWNAVGA) form the signal peptide. Residues 25–28 (RDAR) constitute a propeptide that is removed on maturation.

This sequence belongs to the scoloptoxin-04 family. Contains 2 disulfide bonds. Expressed by the venom gland.

It is found in the secreted. This is U-scoloptoxin(04)-Er1e from Ethmostigmus rubripes (Giant centipede).